A 129-amino-acid chain; its full sequence is MKTLQFFFLFCCWKAICCNSCELTNITIAIEKEECRFCISINTTWCAGYCYTRDLVYKDPARPNIQKTCTFKELVYETVRVPGCAHHADSLYTYPVATQCHCGKCDSDSTDCTVRGLGPSYCSFGEMKE.

Positions 1 to 20 (MKTLQFFFLFCCWKAICCNS) are cleaved as a signal peptide. 6 cysteine pairs are disulfide-bonded: cysteine 21/cysteine 69, cysteine 35/cysteine 84, cysteine 38/cysteine 122, cysteine 46/cysteine 100, cysteine 50/cysteine 102, and cysteine 105/cysteine 112. Asparagine 25 and asparagine 42 each carry an N-linked (GlcNAc...) asparagine glycan.

This sequence belongs to the glycoprotein hormones subunit beta family. In terms of assembly, heterodimer. The active follitropin is a heterodimer composed of an alpha chain/CGA shared with other hormones and a unique beta chain/FSHB shown here.

Its subcellular location is the secreted. Functionally, together with the alpha chain CGA constitutes follitropin, the follicle-stimulating hormone, and provides its biological specificity to the hormone heterodimer. Binds FSHR, a G protein-coupled receptor, on target cells to activate downstream signaling pathways. Follitropin is involved in follicle development and spermatogenesis in reproductive organs. The protein is Follitropin subunit beta (FSHB) of Gorilla gorilla gorilla (Western lowland gorilla).